We begin with the raw amino-acid sequence, 96 residues long: Muconolactone Delta-isomerase (96 aa).

Belongs to the muconolactone Delta-isomerase family. In terms of assembly, homodecamer.

It catalyses the reaction (S)-muconolactone = (4,5-dihydro-5-oxofuran-2-yl)-acetate. It participates in aromatic compound metabolism; beta-ketoadipate pathway; 5-oxo-4,5-dihydro-2-furylacetate from catechol: step 3/3. This is Muconolactone Delta-isomerase (catC) from Acinetobacter baylyi (strain ATCC 33305 / BD413 / ADP1).